The chain runs to 110 residues: Nucleoid-associated protein PsycPRwf_1729 (110 aa).

The protein belongs to the YbaB/EbfC family. In terms of assembly, homodimer.

Its subcellular location is the cytoplasm. It is found in the nucleoid. Binds to DNA and alters its conformation. May be involved in regulation of gene expression, nucleoid organization and DNA protection. The chain is Nucleoid-associated protein PsycPRwf_1729 from Psychrobacter sp. (strain PRwf-1).